A 566-amino-acid chain; its full sequence is Serine/threonine-protein kinase PknE (566 aa).

The Cytoplasmic portion of the chain corresponds to 1–337 (MDGTAESREG…PLPRSARQPW (337 aa)). Phosphoserine; by autocatalysis is present on Ser-7. Thr-11 carries the post-translational modification Phosphothreonine; by autocatalysis. Residues 16–275 (YRLRRLVGRG…DLSAAAHAAL (260 aa)) form the Protein kinase domain. Residues 22–30 (VGRGGMGDV) and Lys-45 each bind ATP. Phosphothreonine; by autocatalysis occurs at positions 50 and 59. Asp-139 serves as the catalytic Proton acceptor. Phosphothreonine; by autocatalysis is present on residues Thr-170, Thr-175, and Thr-178. The interval 296–330 (PVPSTHPVSPGTRWPQPTPWAGGAPPWGPPSSPLP) is disordered. A helical membrane pass occupies residues 338–358 (LWVGVAVAVVVALAGGLGIAL). The Extracellular segment spans residues 359-566 (AHPWRSSGPR…DPSWLARLIG (208 aa)).

Belongs to the protein kinase superfamily. Ser/Thr protein kinase family. Autophosphorylated on serine and threonine residues. Dephosphorylated by PstP.

It localises to the cell membrane. The catalysed reaction is L-seryl-[protein] + ATP = O-phospho-L-seryl-[protein] + ADP + H(+). It catalyses the reaction L-threonyl-[protein] + ATP = O-phospho-L-threonyl-[protein] + ADP + H(+). The chain is Serine/threonine-protein kinase PknE (pknE) from Mycobacterium bovis (strain ATCC BAA-935 / AF2122/97).